The primary structure comprises 176 residues: Large ribosomal subunit protein uL6 (176 aa).

It belongs to the universal ribosomal protein uL6 family. Part of the 50S ribosomal subunit.

This protein binds to the 23S rRNA, and is important in its secondary structure. It is located near the subunit interface in the base of the L7/L12 stalk, and near the tRNA binding site of the peptidyltransferase center. This is Large ribosomal subunit protein uL6 from Shewanella sediminis (strain HAW-EB3).